The sequence spans 644 residues: uncharacterized protein (644 aa).

A disordered region spans residues 1 to 39 (MKANGLDNDPARTRMERTDIDSEHPEAQPLLNNNHRTLG). Residues 1 to 90 (MKANGLDNDP…ILNILILINT (90 aa)) are Cytoplasmic-facing. Residues 9–26 (DPARTRMERTDIDSEHPE) show a composition bias toward basic and acidic residues. S22, S56, and S63 each carry phosphoserine. Residues 91 to 111 (IWLVTTLISDFFFNINILFGF) form a helical membrane-spanning segment. Over 112–122 (SNRYASFNDLT) the chain is Vacuolar. A helical membrane pass occupies residues 123-143 (LIFISIIANSFNLWFNKLGLY). Residues 144–147 (SALD) are Cytoplasmic-facing. The helical transmembrane segment at 148-168 (YSLNVTLCVLTLFNLALTYLI) threads the bilayer. Residues 169–174 (KYTRQR) are Vacuolar-facing. Residues 175–195 (IGFVGTFTYLWTSFSFFIGAI) traverse the membrane as a helical segment. Topologically, residues 196 to 271 (LDWYLLFYNN…EWVSIGFRNT (76 aa)) are cytoplasmic. The interval 225 to 251 (NENHTNSTENRDRSQYGSGSPTPTHRS) is disordered. A compositionally biased stretch (polar residues) spans 239–251 (QYGSGSPTPTHRS). S244 is subject to Phosphoserine. The chain crosses the membrane as a helical span at residues 272 to 292 (IKFLILIFFALFTLNTLLTTL). The Vacuolar portion of the chain corresponds to 293–644 (DTYRLTHKLP…IGELGKLTED (352 aa)). One can recognise an AB hydrolase-1 domain in the interval 348-619 (PIILFEHGGY…IVEGGHEIYK (272 aa)). The tract at residues 469 to 492 (GRGDGDDGDDGNGNDGDGRNHDKT) is disordered.

It localises to the vacuole membrane. This is an uncharacterized protein from Saccharomyces cerevisiae (strain YJM789) (Baker's yeast).